The sequence spans 147 residues: Globin (147 aa).

Positions 2–147 constitute a Globin domain; that stretch reads SFSAAQVDTV…SVANGIGQYQ (146 aa). Residues His64 and His95 each contribute to the heme b site.

The protein belongs to the globin family. In terms of assembly, homodimer or homooligomer.

The polypeptide is Globin (Aequiyoldia eightsii (Antarctic yoldia)).